Consider the following 195-residue polypeptide: Imidazoleglycerol-phosphate dehydratase (195 aa).

Belongs to the imidazoleglycerol-phosphate dehydratase family.

It is found in the cytoplasm. The catalysed reaction is D-erythro-1-(imidazol-4-yl)glycerol 3-phosphate = 3-(imidazol-4-yl)-2-oxopropyl phosphate + H2O. It functions in the pathway amino-acid biosynthesis; L-histidine biosynthesis; L-histidine from 5-phospho-alpha-D-ribose 1-diphosphate: step 6/9. The chain is Imidazoleglycerol-phosphate dehydratase from Sphingopyxis alaskensis (strain DSM 13593 / LMG 18877 / RB2256) (Sphingomonas alaskensis).